The chain runs to 533 residues: Di/tripeptide-binding protein 3 (533 aa).

Residues 1 to 24 (MRKILPLRAWLAAGLILGSPFSHA) form the signal peptide.

The protein belongs to the bacterial solute-binding protein 5 family. As to quaternary structure, the complex is composed of two ATP-binding proteins (DppD and DppF), two transmembrane proteins (DppB and DppC) and a solute-binding protein (DppA3). Five orthologous SBPs (DppA1-A5) are present in P.aeruginosa, which increases the substrate specificity of the DppBCDF transporter.

In terms of biological role, part of the ABC transporter DppABCDF involved in the uptake of various di/tripeptides. Prefers dipeptides with acidic residues at the C-terminal end. Involved in the uptake of phaseolotoxin, a toxic tripeptide inhibiting the enzyme ornithine carbamoyltransferase. The sequence is that of Di/tripeptide-binding protein 3 from Pseudomonas aeruginosa (strain UCBPP-PA14).